A 360-amino-acid chain; its full sequence is Zinc finger protein ztf-2 (360 aa).

The tract at residues 19 to 41 is disordered; the sequence is LSSPEKEHRRKRRRGEVANPSNT. C2H2-type zinc fingers lie at residues 87 to 109, 115 to 138, and 180 to 203; these read RTCS…KRVH, FKCR…AKTH, and YRCQ…SHLH. Residues 248-260 are compositionally biased toward low complexity; the sequence is PLSPCRSESSSDS. Residues 248–272 form a disordered region; sequence PLSPCRSESSSDSGIQTDPEEEASI.

Expressed in pharyngeal epithelium/arcade, which connects the pharynx to the mouth.

In terms of biological role, transcription factor. Represses gene expression, probably via binding to DNA consensus sequence 5'-[AT][CT]TTCC[AC][AG]-3' in promoter regions. May play a role in pharynx morphogenesis. This Caenorhabditis elegans protein is Zinc finger protein ztf-2.